Here is a 290-residue protein sequence, read N- to C-terminus: S-adenosylmethionine decarboxylase proenzyme (290 aa).

The active-site Schiff-base intermediate with substrate; via pyruvic acid is Ser138. A Pyruvic acid (Ser); by autocatalysis modification is found at Ser138. His143 functions as the Proton acceptor; for processing activity in the catalytic mechanism. Catalysis depends on Cys166, which acts as the Proton donor; for catalytic activity.

It belongs to the prokaryotic AdoMetDC family. Type 2 subfamily. As to quaternary structure, heterooctamer of four alpha and four beta chains arranged as a tetramer of alpha/beta heterodimers. Pyruvate is required as a cofactor. Post-translationally, is synthesized initially as an inactive proenzyme. Formation of the active enzyme involves a self-maturation process in which the active site pyruvoyl group is generated from an internal serine residue via an autocatalytic post-translational modification. Two non-identical subunits are generated from the proenzyme in this reaction, and the pyruvate is formed at the N-terminus of the alpha chain, which is derived from the carboxyl end of the proenzyme. The post-translation cleavage follows an unusual pathway, termed non-hydrolytic serinolysis, in which the side chain hydroxyl group of the serine supplies its oxygen atom to form the C-terminus of the beta chain, while the remainder of the serine residue undergoes an oxidative deamination to produce ammonia and the pyruvoyl group blocking the N-terminus of the alpha chain.

It carries out the reaction S-adenosyl-L-methionine + H(+) = S-adenosyl 3-(methylsulfanyl)propylamine + CO2. The protein operates within amine and polyamine biosynthesis; S-adenosylmethioninamine biosynthesis; S-adenosylmethioninamine from S-adenosyl-L-methionine: step 1/1. Catalyzes the decarboxylation of S-adenosylmethionine to S-adenosylmethioninamine (dcAdoMet), the propylamine donor required for the synthesis of the polyamines spermine and spermidine from the diamine putrescine. The chain is S-adenosylmethionine decarboxylase proenzyme from Heliobacterium modesticaldum (strain ATCC 51547 / Ice1).